The sequence spans 635 residues: Early transcription factor 70 kDa subunit (635 aa).

Residues 32–185 (RSIIDENKSV…SNIISLMSDE (154 aa)) form the Helicase ATP-binding domain. 45-52 (HIMGSGKT) contacts ATP. The short motif at 135-138 (DEAH) is the DEXH box element. One can recognise a Helicase C-terminal domain in the interval 326-505 (KFKYFINKIE…TLPFDIKKLL (180 aa)).

Belongs to the helicase family. VETF subfamily. As to quaternary structure, heterodimer of a 70 kDa and a 82 kDa subunit. Part of the early transcription complex composed of ETF, RAP94, and the DNA-directed RNA polymerase.

The protein resides in the virion. Functionally, acts with RNA polymerase to initiate transcription from early gene promoters. Is recruited by the RPO-associated protein of 94 kDa (RAP94) to form the early transcription complex, which also contains the core RNA polymerase. ETF heterodimer binds to early gene promoters. This Oryctolagus cuniculus (Rabbit) protein is Early transcription factor 70 kDa subunit (VETFS).